Consider the following 201-residue polypeptide: Heat shock protein beta-1 (201 aa).

Residue Ser-15 is modified to Phosphoserine; by PKA and PKC. The region spanning 83–193 (ALSRQMSSGM…SETTIPVNVE (111 aa)) is the sHSP domain.

This sequence belongs to the small heat shock protein (HSP20) family. Homooligomer. Homodimer; becomes monomeric upon activation. Heterooligomer.

Its subcellular location is the cytoplasm. It localises to the nucleus. It is found in the cytoskeleton. The protein localises to the spindle. Functionally, small heat shock protein which functions as a molecular chaperone probably maintaining denatured proteins in a folding-competent state. Plays a role in stress resistance and actin organization. The polypeptide is Heat shock protein beta-1 (hspb1) (Poeciliopsis lucida (Desert topminnow)).